The primary structure comprises 281 residues: 2,3,4,5-tetrahydropyridine-2,6-dicarboxylate N-succinyltransferase (281 aa).

Residues R108 and D145 each coordinate substrate.

It belongs to the transferase hexapeptide repeat family. Homotrimer.

It is found in the cytoplasm. It carries out the reaction (S)-2,3,4,5-tetrahydrodipicolinate + succinyl-CoA + H2O = (S)-2-succinylamino-6-oxoheptanedioate + CoA. Its pathway is amino-acid biosynthesis; L-lysine biosynthesis via DAP pathway; LL-2,6-diaminopimelate from (S)-tetrahydrodipicolinate (succinylase route): step 1/3. The sequence is that of 2,3,4,5-tetrahydropyridine-2,6-dicarboxylate N-succinyltransferase from Parvibaculum lavamentivorans (strain DS-1 / DSM 13023 / NCIMB 13966).